Consider the following 37-residue polypeptide: Small ribosomal subunit protein eS32 (37 aa).

Belongs to the eukaryotic ribosomal protein eS32 family. Part of the small ribosomal subunit.

In Pyrococcus furiosus (strain ATCC 43587 / DSM 3638 / JCM 8422 / Vc1), this protein is Small ribosomal subunit protein eS32.